The sequence spans 294 residues: Methionine aminopeptidase (294 aa).

His-65 is a substrate binding site. Positions 85, 96, and 156 each coordinate a divalent metal cation. His-164 serves as a coordination point for substrate. Residues Glu-189 and Glu-279 each contribute to the a divalent metal cation site.

Belongs to the peptidase M24A family. Methionine aminopeptidase archaeal type 2 subfamily. In terms of assembly, monomer. Co(2+) serves as cofactor. It depends on Zn(2+) as a cofactor. The cofactor is Mn(2+). Fe(2+) is required as a cofactor.

The enzyme catalyses Release of N-terminal amino acids, preferentially methionine, from peptides and arylamides.. Its function is as follows. Removes the N-terminal methionine from nascent proteins. The N-terminal methionine is often cleaved when the second residue in the primary sequence is small and uncharged (Met-Ala-, Cys, Gly, Pro, Ser, Thr, or Val). The chain is Methionine aminopeptidase from Methanocaldococcus jannaschii (strain ATCC 43067 / DSM 2661 / JAL-1 / JCM 10045 / NBRC 100440) (Methanococcus jannaschii).